The sequence spans 113 residues: Protein FMC1 homolog (113 aa).

A disordered region spans residues 94-113 (SAGLVGLKLPHQPGGKGWEP).

It belongs to the FMC1 family. In terms of assembly, interacts with ATPAF2.

The protein resides in the mitochondrion. In terms of biological role, plays a role in the assembly/stability of the mitochondrial membrane ATP synthase (F(1)F(0) ATP synthase or Complex V). The protein is Protein FMC1 homolog of Homo sapiens (Human).